The chain runs to 534 residues: MRLRGRGPRAAPSSSSGAGDARRLAPPGRNPFVHELRLSALQKAQVAFMTLTLFPIRLLFAAFMMLLAWPFALLASLGPPDKEPEQPLALWRKVVDFLLKAIMRTMWFAGGFHRVAVKGRQALPTEAAILTLAPHSSYFDAIPVTMTMSSIVMKAESRDIPIWGTLIRYIRPVFVSRSDQDSRRKTVEEIKRRAQSNGKWPQIMIFPEGTCTNRTCLITFKPGAFIPGVPVQPVVLRYPNKLDTITWTWQGPGALKILWLTLCQFQNQVEIEFLPVYCPSEEEKRNPALYASNVRRVMAKALGVSVTDYTFEDCQLALAEGQLRLPADTCLLEFARLVRGLGLKPENLEKDLDKYSESARMKRGEKIRLPEFAAYLEVPVSDALEDMFSLFDESGGGEIDLREYVVALSVVCRPSQTLATIQLAFKMYGSPEDGSIDEANLSCILKTALGVSELTVTDLFQAIDQEDKGRITFDDFCGFAEMYPDYAEDYLYPDQTHFDSCAQTPPAPTPNGFCIDFSPENSDFGRKNSCKKAD.

Residues 1-25 (MRLRGRGPRAAPSSSSGAGDARRLA) form a disordered region. The Cytoplasmic segment spans residues 1–57 (MRLRGRGPRAAPSSSSGAGDARRLAPPGRNPFVHELRLSALQKAQVAFMTLTLFPIR). The segment covering 8–19 (PRAAPSSSSGAG) has biased composition (low complexity). The helical; Signal-anchor for type II membrane protein transmembrane segment at 58-78 (LLFAAFMMLLAWPFALLASLG) threads the bilayer. Topologically, residues 79–534 (PPDKEPEQPL…GRKNSCKKAD (456 aa)) are lumenal. Positions 135-140 (HSSYFD) match the HXXXXD motif motif. EF-hand domains lie at 379–414 (PVSD…VCRP) and 451–486 (VSEL…YPDY). Asp392, Ser394, Glu398, and Glu403 together coordinate Ca(2+). A Di-lysine motif motif is present at residues 531-534 (KKAD).

Belongs to the 1-acyl-sn-glycerol-3-phosphate acyltransferase family. In terms of tissue distribution, predominantly expressed in lung where it is enriched in alveolar type II cells. Expressed at lower levels in spleen and brain. Also detected in erythroleukemic cells and reticulocytes. Weakly or not expressed in other tissues.

It is found in the endoplasmic reticulum membrane. The protein resides in the golgi apparatus membrane. It localises to the cell membrane. Its subcellular location is the lipid droplet. It carries out the reaction a 1-acyl-sn-glycero-3-phosphocholine + an acyl-CoA = a 1,2-diacyl-sn-glycero-3-phosphocholine + CoA. It catalyses the reaction a 1-O-alkyl-sn-glycero-3-phosphocholine + acetyl-CoA = a 1-O-alkyl-2-acetyl-sn-glycero-3-phosphocholine + CoA. The catalysed reaction is a 1-acyl-sn-glycero-3-phosphate + an acyl-CoA = a 1,2-diacyl-sn-glycero-3-phosphate + CoA. The enzyme catalyses a 1-O-(1Z-alkenyl)-sn-glycero-3-phosphocholine + an acyl-CoA = a 1-O-(1Z-alkenyl)-2-acyl-sn-glycero-3-phosphocholine + CoA. It carries out the reaction 1-acyl-sn-glycero-3-phospho-(1'-sn-glycerol) + an acyl-CoA = a 1,2-diacyl-sn-glycero-3-phospho-(1'-sn-glycerol) + CoA. It catalyses the reaction 1-hexadecanoyl-sn-glycero-3-phosphocholine + hexadecanoyl-CoA = 1,2-dihexadecanoyl-sn-glycero-3-phosphocholine + CoA. The catalysed reaction is 1-O-hexadecyl-sn-glycero-3-phosphocholine + hexadecanoyl-CoA = 1-O-hexadecyl-2-hexadecanoyl-sn-glycero-3-phosphocholine + CoA. The enzyme catalyses a 1-O-(1Z-alkenyl)-sn-glycero-3-phosphocholine + hexadecanoyl-CoA = 1-O-(1Z)-alkenyl-2-hexadecanoyl-sn-glycero-3-phosphocholine + CoA. It carries out the reaction 1-hexadecanoyl-sn-glycero-3-phospho-(1'-sn-glycerol) + hexadecanoyl-CoA = 1,2-dihexadecanoyl-sn-glycero-3-phospho-(1'-sn-glycerol) + CoA. It catalyses the reaction 1-dodecanoyl-sn-glycero-3-phosphocholine + hexadecanoyl-CoA = 1-dodecanoyl-2-hexadecanoyl-sn-glycero-3-phosphocholine + CoA. The catalysed reaction is 1-tetradecanoyl-sn-glycero-3-phosphocholine + hexadecanoyl-CoA = 1-tetradecanoyl-2-hexadecanoyl-sn-glycero-3-phosphocholine + CoA. The enzyme catalyses 1-O-octadecyl-sn-glycero-3-phosphocholine + hexadecanoyl-CoA = 1-O-octadecyl-2-hexadecanoyl-sn-glycero-3-phosphocholine + CoA. It carries out the reaction 1-octadecanoyl-sn-glycero-3-phosphocholine + hexadecanoyl-CoA = 1-octadecanoyl-2-hexadecanoyl-sn-glycero-3-phosphocholine + CoA. It catalyses the reaction 1-(9Z-octadecenoyl)-sn-glycero-3-phosphocholine + hexadecanoyl-CoA = 1-(9Z-octadecenoyl)-2-hexadecanoyl-sn-glycero-3-phosphocholine + CoA. The catalysed reaction is 1-eicosanoyl-sn-glycero-3-phosphocholine + hexadecanoyl-CoA = 1-eicosanoyl-2-hexadecanoyl-sn-glycero-3-phosphocholine + CoA. The enzyme catalyses hexanoyl-CoA + 1-hexadecanoyl-sn-glycero-3-phosphocholine = 1-hexadecanoyl-2-hexanoyl-sn-glycero-3-phosphocholine + CoA. It carries out the reaction octanoyl-CoA + 1-hexadecanoyl-sn-glycero-3-phosphocholine = 1-hexadecanoyl-2-octanoyl-sn-glycero-3-phosphocholine + CoA. It catalyses the reaction decanoyl-CoA + 1-hexadecanoyl-sn-glycero-3-phosphocholine = 1-hexadecanoyl-2-decanoyl-sn-glycero-3-phosphocholine + CoA. The catalysed reaction is dodecanoyl-CoA + 1-hexadecanoyl-sn-glycero-3-phosphocholine = 1-hexadecanoyl-2-dodecanoyl-sn-glycero-3-phosphocholine + CoA. The enzyme catalyses tetradecanoyl-CoA + 1-hexadecanoyl-sn-glycero-3-phosphocholine = 1-hexadecanoyl-2-tetradecanoyl-sn-glycero-3-phosphocholine + CoA. It carries out the reaction 1-hexadecanoyl-sn-glycero-3-phosphocholine + (9Z)-octadecenoyl-CoA = 1-hexadecanoyl-2-(9Z-octadecenoyl)-sn-glycero-3-phosphocholine + CoA. It catalyses the reaction (9Z,12Z)-octadecadienoyl-CoA + 1-hexadecanoyl-sn-glycero-3-phosphocholine = 1-hexadecanoyl-2-(9Z,12Z-octadecadienoyl)-sn-glycero-3-phosphocholine + CoA. The catalysed reaction is (4Z,7Z,10Z,13Z,16Z,19Z)-docosahexaenoyl-CoA + 1-hexadecanoyl-sn-glycero-3-phosphocholine = 1-hexadecanoyl-2-(4Z,7Z,10Z,13Z,16Z,19Z-docosahexaenoyl)-sn-glycero-3-phosphocholine + CoA. The enzyme catalyses 1-hexadecanoyl-sn-glycero-3-phosphocholine + acetyl-CoA = 1-hexadecanoyl-2-acetyl-sn-glycero-3-phosphocholine + CoA. It carries out the reaction eicosanoyl-CoA + 1-hexadecanoyl-sn-glycero-3-phosphocholine = 1-hexadecanoyl-2-eicosanoyl-sn-glycero-3-phosphocholine + CoA. It catalyses the reaction 1-O-hexadecyl-sn-glycero-3-phosphocholine + acetyl-CoA = 1-O-hexadecyl-2-acetyl-sn-glycero-3-phosphocholine + CoA. The catalysed reaction is a 1-acyl-sn-glycero-3-phosphocholine + hexadecanoyl-CoA = 1-acyl-2-hexadecanoyl-sn-glycero-3-phosphocholine + CoA. The enzyme catalyses a 1-acyl-sn-glycero-3-phosphate + hexadecanoyl-CoA = 1-acyl-2-hexadecanoyl-sn-glycero-3-phosphate + CoA. It carries out the reaction 1-acyl-sn-glycero-3-phospho-(1'-sn-glycerol) + hexadecanoyl-CoA = 1-acyl-2-hexadecanoyl-sn-glycero-3-phospho-(1'-sn-glycerol) + CoA. It participates in lipid metabolism; phospholipid metabolism. With respect to regulation, not activated by inflammatory stimulation. Inhibited by Cu(2+), Fe(2+), Ca(2+) and Mg(2+). Activity is not affected by Co(2+) or Mn(2+). In terms of biological role, exhibits both acyltransferase and acetyltransferase activities. Activity is calcium-independent. Catalyzes the conversion of lysophosphatidylcholine (1-acyl-sn-glycero-3-phosphocholine or LPC) into phosphatidylcholine (1,2-diacyl-sn-glycero-3-phosphocholine or PC). Catalyzes the conversion 1-acyl-sn-glycerol-3-phosphate (lysophosphatidic acid or LPA) into 1,2-diacyl-sn-glycerol-3-phosphate (phosphatidic acid or PA) by incorporating an acyl moiety at the sn-2 position of the glycerol backbone. Displays a clear preference for saturated fatty acyl-CoAs, and 1-myristoyl or 1-palmitoyl LPC as acyl donors and acceptors, respectively. Involved in platelet-activating factor (PAF) biosynthesis by catalyzing the conversion of the PAF precursor, 1-O-alkyl-sn-glycero-3-phosphocholine (lyso-PAF) into 1-O-alkyl-2-acetyl-sn-glycero-3-phosphocholine (PAF). May synthesize phosphatidylcholine in pulmonary surfactant, thereby playing a pivotal role in respiratory physiology. Involved in the regulation of lipid droplet number and size. This chain is Lysophosphatidylcholine acyltransferase 1 (Lpcat1), found in Mus musculus (Mouse).